Here is a 375-residue protein sequence, read N- to C-terminus: MDIERKIELIKKKPTEELLTEENLRHLLEVGAPLQHYIGFEISGYIHLGTGLMAGAKIADLQKAGVKTRIFLADWHSWINDKLGGDLEVIQKVALTYFKEGMKQSIKVMGGDPDKVEFVLASEILDKGDYWQTVIDISKNVTLARMLRSITIMGRQMGEAIDFAKLIYPAMQVADIFYQGVTIAHAGMDQRKAHVIAIEVAQKLKYHPLEWKGEKLKPVALHHHLLLGLQEPPVWPIESEEQFKELKTQMKMSKSKPYSAVFIHDSPEEIKQKLRKAFCPAREVKYNPVLDWAEYIIFREEPTEFTIHRPAKFGGDVTYTTFEELKKDFAEGKLHPLDLKNAVAEYLIELLKPVREYFEKHPEPLELMREIKITR.

The L-tyrosine site is built by tyrosine 37, tyrosine 168, glutamine 172, aspartate 175, and glutamine 190. The 'KMSKS' region signature appears at 251 to 255 (KMSKS). Residue lysine 254 coordinates ATP.

It belongs to the class-I aminoacyl-tRNA synthetase family. TyrS type 4 subfamily. Homodimer.

The protein resides in the cytoplasm. It carries out the reaction tRNA(Tyr) + L-tyrosine + ATP = L-tyrosyl-tRNA(Tyr) + AMP + diphosphate + H(+). Functionally, catalyzes the attachment of tyrosine to tRNA(Tyr) in a two-step reaction: tyrosine is first activated by ATP to form Tyr-AMP and then transferred to the acceptor end of tRNA(Tyr). The chain is Tyrosine--tRNA ligase from Thermococcus kodakarensis (strain ATCC BAA-918 / JCM 12380 / KOD1) (Pyrococcus kodakaraensis (strain KOD1)).